Consider the following 280-residue polypeptide: 3,2-trans-enoyl-CoA isomerase (280 aa).

Substrate-binding positions include 68-72 (SGADF) and Leu126. The active-site Proton donor/acceptor is Glu158. Positions 278–280 (HRL) match the Microbody targeting signal motif.

It belongs to the enoyl-CoA hydratase/isomerase family. Homohexamer, dimer of trimers. Interacts with DCI1.

It is found in the peroxisome. The enzyme catalyses a (3Z)-enoyl-CoA = a 4-saturated (2E)-enoyl-CoA. The catalysed reaction is a (3E)-enoyl-CoA = a 4-saturated (2E)-enoyl-CoA. It participates in lipid metabolism; fatty acid beta-oxidation. In terms of biological role, essential for the beta oxidation of unsaturated fatty acids. This chain is 3,2-trans-enoyl-CoA isomerase (ECI1), found in Saccharomyces cerevisiae (strain ATCC 204508 / S288c) (Baker's yeast).